We begin with the raw amino-acid sequence, 132 residues long: Small ribosomal subunit protein uS11c (132 aa).

This sequence belongs to the universal ribosomal protein uS11 family. In terms of assembly, part of the 30S ribosomal subunit.

It localises to the plastid. It is found in the chloroplast. In Gnetum parvifolium (Small-leaved jointfir), this protein is Small ribosomal subunit protein uS11c.